The sequence spans 99 residues: Large ribosomal subunit protein bL28 (99 aa).

The protein belongs to the bacterial ribosomal protein bL28 family.

This Rhodospirillum rubrum (strain ATCC 11170 / ATH 1.1.1 / DSM 467 / LMG 4362 / NCIMB 8255 / S1) protein is Large ribosomal subunit protein bL28.